A 487-amino-acid polypeptide reads, in one-letter code: Berbamunine synthase (487 aa).

Residue Cys-429 participates in heme binding.

It belongs to the cytochrome P450 family. Requires heme as cofactor.

It is found in the endoplasmic reticulum membrane. The protein localises to the microsome membrane. It catalyses the reaction (R)-N-methylcoclaurine + (S)-N-methylcoclaurine + reduced [NADPH--hemoprotein reductase] + O2 = berbamunine + oxidized [NADPH--hemoprotein reductase] + 2 H2O + H(+). The protein operates within alkaloid biosynthesis; berbamunine biosynthesis; berbamunine from (R)-N-methylcoclaurine and (S)-N-methylcoclaurine: step 1/1. Functionally, forms the bisbenzylisoquinoline alkaloid berbamunine by phenol oxidation of N-methylcoclaurine without the incorporation of oxygen into the product. Oxidatively couples either two molecules of (R)-N-methylcoclaurine to form the (R,R) dimer guattegaumerine or one molecule each of (R)- and (S)-N-methylcoclaurine to form the (R,S) dimer berbamunine. In Berberis stolonifera (Barberry), this protein is Berbamunine synthase (CYP80A1).